A 143-amino-acid polypeptide reads, in one-letter code: Glutamate-rich protein 4 (143 aa).

Residues Leu90–Gly106 show a composition bias toward acidic residues. A disordered region spans residues Leu90–Ile143. Over residues Glu107–Lys116 the composition is skewed to basic and acidic residues.

The chain is Glutamate-rich protein 4 (Erich4) from Rattus norvegicus (Rat).